The following is a 660-amino-acid chain: Bifunctional polymyxin resistance protein ArnA (660 aa).

Residues 1-304 (MKTVVFAYHD…TLGLVQGSRL (304 aa)) form a formyltransferase ArnAFT region. 86–88 (HLI) contacts (6R)-10-formyltetrahydrofolate. The active-site Proton donor; for formyltransferase activity is the His-104. Residues Arg-114 and 136-140 (VKRAD) contribute to the (6R)-10-formyltetrahydrofolate site. A dehydrogenase ArnADH region spans residues 314-660 (RRTRVLILGV…RTVDLTDKPS (347 aa)). Residues Asp-347 and 368-369 (DI) contribute to the NAD(+) site. UDP-alpha-D-glucuronate is bound by residues Ala-393, Tyr-398, and 432–433 (TS). Residue Glu-434 is the Proton acceptor; for decarboxylase activity of the active site. UDP-alpha-D-glucuronate is bound by residues Arg-460, Asn-492, 526–535 (KLIDGGKQKR), and Tyr-613. Arg-619 functions as the Proton donor; for decarboxylase activity in the catalytic mechanism.

In the N-terminal section; belongs to the Fmt family. UDP-L-Ara4N formyltransferase subfamily. It in the C-terminal section; belongs to the NAD(P)-dependent epimerase/dehydratase family. UDP-glucuronic acid decarboxylase subfamily. In terms of assembly, homohexamer, formed by a dimer of trimers.

The enzyme catalyses UDP-alpha-D-glucuronate + NAD(+) = UDP-beta-L-threo-pentopyranos-4-ulose + CO2 + NADH. It catalyses the reaction UDP-4-amino-4-deoxy-beta-L-arabinose + (6R)-10-formyltetrahydrofolate = UDP-4-deoxy-4-formamido-beta-L-arabinose + (6S)-5,6,7,8-tetrahydrofolate + H(+). It functions in the pathway nucleotide-sugar biosynthesis; UDP-4-deoxy-4-formamido-beta-L-arabinose biosynthesis; UDP-4-deoxy-4-formamido-beta-L-arabinose from UDP-alpha-D-glucuronate: step 1/3. Its pathway is nucleotide-sugar biosynthesis; UDP-4-deoxy-4-formamido-beta-L-arabinose biosynthesis; UDP-4-deoxy-4-formamido-beta-L-arabinose from UDP-alpha-D-glucuronate: step 3/3. The protein operates within bacterial outer membrane biogenesis; lipopolysaccharide biosynthesis. In terms of biological role, bifunctional enzyme that catalyzes the oxidative decarboxylation of UDP-glucuronic acid (UDP-GlcUA) to UDP-4-keto-arabinose (UDP-Ara4O) and the addition of a formyl group to UDP-4-amino-4-deoxy-L-arabinose (UDP-L-Ara4N) to form UDP-L-4-formamido-arabinose (UDP-L-Ara4FN). The modified arabinose is attached to lipid A and is required for resistance to polymyxin and cationic antimicrobial peptides. This chain is Bifunctional polymyxin resistance protein ArnA, found in Escherichia coli O81 (strain ED1a).